The following is a 192-amino-acid chain: uncharacterized protein (192 aa).

One can recognise a Nudix hydrolase domain in the interval 29–160; that stretch reads HRQAAVLIPI…PLDIYRRGDS (132 aa). A Nudix box motif is present at residues 67–89; sequence GAVDDTDASVIAAALREAEEEVA. Mg(2+) is bound by residues E83 and E87.

It belongs to the Nudix hydrolase family. PCD1 subfamily. The cofactor is Mn(2+). Requires Mg(2+) as cofactor.

Functionally, probably mediates the hydrolysis of some nucleoside diphosphate derivatives. This is an uncharacterized protein from Escherichia coli (strain SE11).